The primary structure comprises 443 residues: EP1-like glycoprotein 4 (443 aa).

Residues 1 to 22 form the signal peptide; the sequence is MEFSTTLALFFTLSIFLVGAQA. The region spanning 29–159 is the Bulb-type lectin domain; that stretch reads QFRVVNEGGY…NGKFVWQSFD (131 aa). Asn66, Asn102, Asn258, and Asn269 each carry an N-linked (GlcNAc...) asparagine glycan. The stretch at 254–296 is one WD repeat; it reads GSQFNVSTFLSRPKHNATLSFLRLESDGNIRVWSYSTLATSTA. Residues 356 to 433 enclose the PAN domain; it reads CDPKTFHYFK…TSLVAYVKAP (78 aa). 2 disulfides stabilise this stretch: Cys387–Cys409 and Cys391–Cys397. Asn434 carries N-linked (GlcNAc...) asparagine glycosylation.

The protein resides in the secreted. It localises to the cell wall. The protein is EP1-like glycoprotein 4 of Arabidopsis thaliana (Mouse-ear cress).